A 488-amino-acid chain; its full sequence is Protein nucleotidyltransferase YdiU (488 aa).

Glycine 91, glycine 93, arginine 94, lysine 114, aspartate 126, glycine 127, arginine 177, and arginine 184 together coordinate ATP. The disordered stretch occupies residues 108 to 127 (RFDIQLKGSGPTPYSRRGDG). Aspartate 253 functions as the Proton acceptor in the catalytic mechanism. Mg(2+)-binding residues include asparagine 254 and aspartate 263. Aspartate 263 is a binding site for ATP.

It belongs to the SELO family. The cofactor is Mg(2+). Mn(2+) is required as a cofactor.

It carries out the reaction L-seryl-[protein] + ATP = 3-O-(5'-adenylyl)-L-seryl-[protein] + diphosphate. The catalysed reaction is L-threonyl-[protein] + ATP = 3-O-(5'-adenylyl)-L-threonyl-[protein] + diphosphate. It catalyses the reaction L-tyrosyl-[protein] + ATP = O-(5'-adenylyl)-L-tyrosyl-[protein] + diphosphate. The enzyme catalyses L-histidyl-[protein] + UTP = N(tele)-(5'-uridylyl)-L-histidyl-[protein] + diphosphate. It carries out the reaction L-seryl-[protein] + UTP = O-(5'-uridylyl)-L-seryl-[protein] + diphosphate. The catalysed reaction is L-tyrosyl-[protein] + UTP = O-(5'-uridylyl)-L-tyrosyl-[protein] + diphosphate. Its function is as follows. Nucleotidyltransferase involved in the post-translational modification of proteins. It can catalyze the addition of adenosine monophosphate (AMP) or uridine monophosphate (UMP) to a protein, resulting in modifications known as AMPylation and UMPylation. This chain is Protein nucleotidyltransferase YdiU, found in Bacillus anthracis (strain A0248).